The following is a 1451-amino-acid chain: Copper-transporting ATPase 2 (1451 aa).

The Cytoplasmic segment spans residues M1–S646. HMA domains lie at T57–S123, A142–A208, and A256–F322. Cu(+)-binding residues include C68, C71, C153, C156, C267, and C270. The segment at D328–P353 is disordered. Over residues G335 to S345 the composition is skewed to low complexity. Residues R355–S421 form the HMA 4 domain. S469, S471, and S474 each carry phosphoserine. HMA domains lie at Q481 to A547 and G557 to S623. Positions 492, 495, 568, and 571 each coordinate Cu(+). A helical membrane pass occupies residues F647–S668. The Extracellular portion of the chain corresponds to S669 to L690. A helical membrane pass occupies residues I691–Q710. Residues A711–H717 lie on the Cytoplasmic side of the membrane. The chain crosses the membrane as a helical span at residues K718 to L738. At V739 to F757 the chain is on the extracellular side. The helical transmembrane segment at D758–K778 threads the bilayer. Topologically, residues S779 to R912 are cytoplasmic. The helical transmembrane segment at F913 to I935 threads the bilayer. At G936 to F965 the chain is on the extracellular side. Residues Q966–A987 form a helical membrane-spanning segment. The Cytoplasmic segment spans residues V988–R1310. D1020 acts as the 4-aspartylphosphate intermediate in catalysis. Mg(2+)-binding residues include D1255 and D1259. Residues V1311–A1328 traverse the membrane as a helical segment. Residues G1329–Q1339 lie on the Extracellular side of the membrane. The chain crosses the membrane as a helical span at residues P1340–L1357. Residues Q1358–I1451 lie on the Cytoplasmic side of the membrane. Residues S1384 and S1443 each carry the phosphoserine modification.

It belongs to the cation transport ATPase (P-type) (TC 3.A.3) family. Type IB subfamily. As to quaternary structure, monomer. Interacts with COMMD1/MURR1. Interacts with DCTN4, in a copper-dependent manner. Interacts with ATOX1. Interacts (via C-terminus) with ZBTB16/PLZF. As to expression, expressed in brain, liver, kidney, spleen and stomach. In brain, detected in neuronal cells of the hippocampal formation, olfactory bulbs, cerebellum, cerebral cortex and nuclei in the brainstem. Isoform PINA is expressed during night in adult pineal gland (pinealocytes) and retina. Isoform PINA is not detected in other tissue.

It localises to the golgi apparatus. The protein localises to the trans-Golgi network membrane. Its subcellular location is the late endosome. It carries out the reaction Cu(+)(in) + ATP + H2O = Cu(+)(out) + ADP + phosphate + H(+). Its function is as follows. Copper ion transmembrane transporter involved in the export of copper out of the cells, such as the efflux of hepatic copper into the bile. The protein is Copper-transporting ATPase 2 (Atp7b) of Rattus norvegicus (Rat).